We begin with the raw amino-acid sequence, 296 residues long: Methylsterol monooxygenase erg25B (296 aa).

3 helical membrane-spanning segments follow: residues 50 to 70 (IMSFVMHEIVYFGRSVPWILI), 98 to 118 (FVLLSHFTVELPQIWLFHPMA), and 125 to 145 (TSVPFPSVWTMMYQIAIFFVL). In terms of domain architecture, Fatty acid hydroxylase spans 140–276 (AIFFVLEDTW…FRWWDYLLDT (137 aa)). Positions 154 to 158 (HRALH) match the Histidine box-1 motif. Positions 167-171 (HKIHH) match the Histidine box-2 motif. A helical membrane pass occupies residues 201–221 (ILWCALTGDLHIFTMYVWIVL). The Histidine box-3 motif lies at 251–257 (HHDLHHE).

This sequence belongs to the sterol desaturase family. Requires Fe cation as cofactor.

Its subcellular location is the endoplasmic reticulum membrane. Its pathway is steroid metabolism; ergosterol biosynthesis. In terms of biological role, sterol-C4-methyl oxidase; part of the third module of ergosterol biosynthesis pathway that includes the late steps of the pathway. Erg25B is a catalytic component of the C-4 demethylation complex that catalyzes the conversion of 4,4-dimethylfecosterol into fecosterol via 4-methylfecosterol. The third module or late pathway involves the ergosterol synthesis itself through consecutive reactions that mainly occur in the endoplasmic reticulum (ER) membrane. Firstly, the squalene synthase erg9 catalyzes the condensation of 2 farnesyl pyrophosphate moieties to form squalene, which is the precursor of all steroids. Squalene synthase is crucial for balancing the incorporation of farnesyl diphosphate (FPP) into sterol and nonsterol isoprene synthesis. Secondly, squalene is converted into lanosterol by the consecutive action of the squalene epoxidase erg1 and the lanosterol synthase erg7. Then, the delta(24)-sterol C-methyltransferase erg6 methylates lanosterol at C-24 to produce eburicol. Eburicol is the substrate of the sterol 14-alpha demethylase encoded by cyp51A and cyp51B, to yield 4,4,24-trimethyl ergosta-8,14,24(28)-trienol. The C-14 reductase erg24 then reduces the C14=C15 double bond which leads to 4,4-dimethylfecosterol. A sequence of further demethylations at C-4, involving the C-4 demethylation complex containing the C-4 methylsterol oxidases erg25A or erg25B, the sterol-4-alpha-carboxylate 3-dehydrogenase erg26 and the 3-keto-steroid reductase erg27, leads to the production of fecosterol via 4-methylfecosterol. The C-8 sterol isomerase erg2 then catalyzes the reaction which results in unsaturation at C-7 in the B ring of sterols and thus converts fecosterol to episterol. The sterol-C5-desaturase erg3B then catalyzes the introduction of a C-5 double bond in the B ring to produce 5-dehydroepisterol. The 2 other sterol-C5-desaturases, erg3A and erg3C, seem to be less important in ergosterol biosynthesis. The C-22 sterol desaturase erg5 further converts 5-dehydroepisterol into ergosta-5,7,22,24(28)-tetraen-3beta-ol by forming the C-22(23) double bond in the sterol side chain. Finally, ergosta-5,7,22,24(28)-tetraen-3beta-ol is substrate of the C-24(28) sterol reductases erg4A and erg4B to produce ergosterol. Possible alternative sterol biosynthetic pathways might exist from fecosterol to ergosterol, depending on the activities of the erg3 isoforms. In Aspergillus fumigatus (strain ATCC MYA-4609 / CBS 101355 / FGSC A1100 / Af293) (Neosartorya fumigata), this protein is Methylsterol monooxygenase erg25B.